The primary structure comprises 440 residues: Endoglucanase B (440 aa).

A signal peptide spans Met1–Ala33. The Proton donor role is filled by Glu179. Glu305 serves as the catalytic Nucleophile. A Dockerin domain is found at Thr381–Ser440.

The protein belongs to the glycosyl hydrolase 5 (cellulase A) family.

The enzyme catalyses Endohydrolysis of (1-&gt;4)-beta-D-glucosidic linkages in cellulose, lichenin and cereal beta-D-glucans.. The catalysed reaction is Endohydrolysis of (1-&gt;4)-beta-D-xylosidic linkages in xylans.. Functionally, has endoglucanase activity on carboxymethyl-cellulose (CMC), xylan and lichenan, but not Avicel. In Clostridium cellulovorans (strain ATCC 35296 / DSM 3052 / OCM 3 / 743B), this protein is Endoglucanase B (engB).